We begin with the raw amino-acid sequence, 356 residues long: MIELKNISVTFQQKKQEIQAVQDVSLTIDKGDIYGIVGYSGAGKSTLVRVINLLQRPTAGTVIINKENILTFSKKELRQQRKKIGMIFQHFNLMKERTIFSNIDFSLKYSGLSKSERRQKISHLLELVGLSEKRDAYPSQLSGGQKQRVAIARALANDPEILLCDEATSALDPKTTGQILALLKKLNQELNLTIVLITHEMQVVKEICNKVAVMENGCVVESNDIVSIFSQPQQPLTKDFIRTATHIDQALTTILEHPKLADLDKNQELIEFSYVGDQTNEPLIAQLYSQYQVYTNILYGNVEIVQNVPIGHLIVVLSGDEAQRQQALTYLAKQGVRTNVLKTYQQTKQKQNLQVI.

Residues 2–241 (IELKNISVTF…PQQPLTKDFI (240 aa)) enclose the ABC transporter domain. 38 to 45 (GYSGAGKS) contributes to the ATP binding site.

Belongs to the ABC transporter superfamily. Methionine importer (TC 3.A.1.24) family. As to quaternary structure, the complex is composed of two ATP-binding proteins (MetN), two transmembrane proteins (MetI) and a solute-binding protein (MetQ).

The protein resides in the cell membrane. It carries out the reaction L-methionine(out) + ATP + H2O = L-methionine(in) + ADP + phosphate + H(+). It catalyses the reaction D-methionine(out) + ATP + H2O = D-methionine(in) + ADP + phosphate + H(+). In terms of biological role, part of the ABC transporter complex MetNIQ involved in methionine import. Responsible for energy coupling to the transport system. The polypeptide is Methionine import ATP-binding protein MetN 1 (Enterococcus faecalis (strain ATCC 700802 / V583)).